Consider the following 745-residue polypeptide: Elongation factor G, mitochondrial (745 aa).

The tr-type G domain occupies 40–317 (ERIRNIGISA…AVLDYLPNPG (278 aa)). GTP contacts are provided by residues 49 to 56 (AHIDSGKT), 116 to 120 (DTPGH), and 170 to 173 (NKLD).

This sequence belongs to the TRAFAC class translation factor GTPase superfamily. Classic translation factor GTPase family. EF-G/EF-2 subfamily.

The protein resides in the mitochondrion. Its pathway is protein biosynthesis; polypeptide chain elongation. Mitochondrial GTPase that catalyzes the GTP-dependent ribosomal translocation step during translation elongation. During this step, the ribosome changes from the pre-translocational (PRE) to the post-translocational (POST) state as the newly formed A-site-bound peptidyl-tRNA and P-site-bound deacylated tRNA move to the P and E sites, respectively. Catalyzes the coordinated movement of the two tRNA molecules, the mRNA and conformational changes in the ribosome. Essential during development as it acts as a retrograde signal from mitochondria to the nucleus to slow down cell proliferation if mitochondrial energy output is low. This chain is Elongation factor G, mitochondrial, found in Drosophila yakuba (Fruit fly).